The following is a 1209-amino-acid chain: Phospholipid-transporting ATPase ID (1209 aa).

Topologically, residues 1–68 are cytoplasmic; that stretch reads MTVPKEIPEK…NIVTFLPVNL (68 aa). The interval 12 to 36 is disordered; that stretch reads ARAGAPPSWSQKKPSWGTEEERRAR. A helical transmembrane segment spans residues 69–89; it reads FEQFQEVANTYFLFLLILQLI. At 90-91 the chain is on the exoplasmic loop side; it reads PQ. A helical membrane pass occupies residues 92–112; it reads ISSLSWFTTIVPLVLVLTITA. The Cytoplasmic segment spans residues 113 to 295; that stretch reads VKDATDDYFR…TSIDRLMNTL (183 aa). The helical transmembrane segment at 296-316 threads the bilayer; the sequence is VLWIFGFLVCMGVILAIGNAI. At 317 to 338 the chain is on the exoplasmic loop side; it reads WEHEVGTRFQVYLPWDEAVDSA. A helical transmembrane segment spans residues 339-359; sequence FFSGFLSFWSYIIILNTVVPI. Residues 360–898 lie on the Cytoplasmic side of the membrane; the sequence is SLYVSVEVIR…KFLCYFFYKN (539 aa). Catalysis depends on aspartate 411, which acts as the 4-aspartylphosphate intermediate. Positions 411, 412, 413, 515, 556, 579, 613, 693, 694, 695, 807, and 813 each coordinate ATP. Aspartate 411 is a binding site for Mg(2+). Residue threonine 413 coordinates Mg(2+). Aspartate 833 is a binding site for Mg(2+). ATP contacts are provided by asparagine 836 and aspartate 837. A Mg(2+)-binding site is contributed by aspartate 837. Residues 899–919 form a helical membrane-spanning segment; that stretch reads FAFTMVHFWFGFFCGFSAQTV. Residues 920–922 lie on the Exoplasmic loop side of the membrane; it reads YDQ. A helical membrane pass occupies residues 923 to 943; it reads YFITLYNIVYTSLPVLAMGVF. Residues 944–972 lie on the Cytoplasmic side of the membrane; it reads DQDVPEQRSMEYPKLYEPGQLNLLFNKRE. Residues 973-993 form a helical membrane-spanning segment; it reads FFICIAQGIYTSVLMFFIPYG. Over 994-1011 the chain is Exoplasmic loop; that stretch reads VFAEATRDDGTQLADYQS. Residues 1012–1032 traverse the membrane as a helical segment; sequence FAVTVATSLVIVVSVQIGLDT. The Cytoplasmic segment spans residues 1033 to 1036; sequence GYWT. The chain crosses the membrane as a helical span at residues 1037–1057; sequence AINHFFIWGSLAVYFAILFAM. The Exoplasmic loop portion of the chain corresponds to 1058-1082; it reads HSNGLFDMFPNQFRFVGNAQNTLAQ. Residues 1083 to 1103 traverse the membrane as a helical segment; that stretch reads PTVWLTIALTTAVCIMPVVAF. Residues 1104 to 1209 are Cytoplasmic-facing; that stretch reads RFLRLSLKPD…SGGAEKPLKG (106 aa). Serine 1175 bears the Phosphoserine mark. The tract at residues 1179 to 1209 is disordered; sequence RSSSSWIESLRRKKSDSANSPSGGAEKPLKG.

It belongs to the cation transport ATPase (P-type) (TC 3.A.3) family. Type IV subfamily. As to quaternary structure, component of a P4-ATPase flippase complex which consists of a catalytic alpha subunit ATP8B2 and an accessory beta subunit TMEM30A or TMEM30B. Mg(2+) is required as a cofactor. Expressed in brain and testes (at protein level).

It is found in the cell membrane. Its subcellular location is the endoplasmic reticulum membrane. It carries out the reaction ATP + H2O + phospholipidSide 1 = ADP + phosphate + phospholipidSide 2.. It catalyses the reaction a 1,2-diacyl-sn-glycero-3-phosphocholine(out) + ATP + H2O = a 1,2-diacyl-sn-glycero-3-phosphocholine(in) + ADP + phosphate + H(+). Its function is as follows. Catalytic component of P4-ATPase flippase complex, which catalyzes the hydrolysis of ATP coupled to the transport of phosphatidylcholine (PC) from the outer to the inner leaflet of the plasma membrane. May contribute to the maintenance of membrane lipid asymmetry. The protein is Phospholipid-transporting ATPase ID of Mus musculus (Mouse).